We begin with the raw amino-acid sequence, 405 residues long: Obg-like ATPase homolog (405 aa).

Residues 17-283 form the OBG-type G domain; it reads PTSGIVGLAN…CKGIASEYFD (267 aa). Residues 26 to 31 and Val-231 contribute to the ATP site; that span reads NVGKST. The TGS domain occupies 312 to 398; the sequence is NLISFFTCGP…QDNDIALFKA (87 aa).

It belongs to the TRAFAC class OBG-HflX-like GTPase superfamily. OBG GTPase family.

The protein localises to the mitochondrion. Functionally, hydrolyzes ATP, and can also hydrolyze GTP with lower efficiency. Has lower affinity for GTP. This chain is Obg-like ATPase homolog (YLF2), found in Saccharomyces cerevisiae (strain ATCC 204508 / S288c) (Baker's yeast).